A 145-amino-acid chain; its full sequence is Basic phospholipase A2 P'513 (145 aa).

An N-terminal signal peptide occupies residues 1–21; that stretch reads MYPAHLLLLLAVCVSLLGASA. A propeptide spanning residues 22 to 27 is cleaved from the precursor; it reads IPPLPL. Disulfide bonds link cysteine 38–cysteine 98, cysteine 54–cysteine 144, cysteine 56–cysteine 72, cysteine 71–cysteine 125, cysteine 78–cysteine 118, cysteine 87–cysteine 111, and cysteine 105–cysteine 116. Positions 55, 57, and 59 each coordinate Ca(2+). The active site involves histidine 75. Position 76 (aspartate 76) interacts with Ca(2+). Aspartate 119 is a catalytic residue.

It belongs to the phospholipase A2 family. Group I subfamily. D49 sub-subfamily. Ca(2+) serves as cofactor. Expressed by the venom gland.

The protein resides in the secreted. It carries out the reaction a 1,2-diacyl-sn-glycero-3-phosphocholine + H2O = a 1-acyl-sn-glycero-3-phosphocholine + a fatty acid + H(+). In terms of biological role, PLA2 catalyzes the calcium-dependent hydrolysis of the 2-acyl groups in 3-sn-phosphoglycerides. In Laticauda laticaudata (Blue-ringed sea krait), this protein is Basic phospholipase A2 P'513.